A 391-amino-acid polypeptide reads, in one-letter code: Small ribosomal subunit protein bS1 (391 aa).

4 consecutive S1 motif domains span residues 16 to 90 (GDKV…LSRR), 108 to 173 (NEII…LSRK), 194 to 262 (GDVI…LSIK), and 279 to 348 (NDVI…LSIK).

It belongs to the bacterial ribosomal protein bS1 family.

Its function is as follows. Binds mRNA; thus facilitating recognition of the initiation point. It is needed to translate mRNA with a short Shine-Dalgarno (SD) purine-rich sequence. The protein is Small ribosomal subunit protein bS1 (rpsA) of Staphylococcus aureus (strain N315).